We begin with the raw amino-acid sequence, 829 residues long: High affinity cAMP-specific and IBMX-insensitive 3',5'-cyclic phosphodiesterase 8A (829 aa).

A disordered region spans residues 16-46 (EDAPSPAAPPLSSGGPRLPQGQKTAALPRTR). Ser20 is subject to Phosphoserine. The region spanning 213-283 (ACNSVFTALE…DTINSCIRIG (71 aa)) is the PAS domain. Residues 287-329 (QGIYYAKKKNGDNIQQNVKIIPVIGQGGKIRHYVSIIRVCNGN) enclose the PAC domain. The tract at residues 341-360 (SDTHTDNQTGKHKDRRKGSL) is disordered. Position 359 is a phosphoserine; by PKA (Ser359). Ser386 and Ser457 each carry phosphoserine. The involved in RAF1-binding stretch occupies residues 454 to 461 (RRLSGNEY). A Phosphotyrosine modification is found at Tyr461. A PDEase domain is found at 480–820 (SLDDVPPRIA…KYWKGLDEMK (341 aa)). His556 serves as the catalytic Proton donor. A divalent metal cation-binding residues include His560, His596, Asp597, and Asp726.

The protein belongs to the cyclic nucleotide phosphodiesterase family. PDE8 subfamily. In terms of assembly, interacts with RAF1. The interaction promotes RAF1 activity. Requires a divalent metal cation as cofactor. In terms of processing, phosphorylated at Ser-359 by PKA under elevated cAMP conditions, this enhances catalytic activity. As to expression, expressed in most tissues except thymus and peripheral blood leukocytes. Highest levels in testis, ovary, small intestine and colon.

The enzyme catalyses 3',5'-cyclic AMP + H2O = AMP + H(+). It functions in the pathway purine metabolism; 3',5'-cyclic AMP degradation; AMP from 3',5'-cyclic AMP: step 1/1. With respect to regulation, inhibited by dipyridimole. Insensitive to selective PDE inhibitors including rolipram and zaprinast as well as to the non-selective inhibitor, IBMX. Unaffected by cGMP. Hydrolyzes the second messenger cAMP, which is a key regulator of many important physiological processes. May be involved in maintaining basal levels of the cyclic nucleotide and/or in the cAMP regulation of germ cell development. Binding to RAF1 reduces RAF1 'Ser-259' inhibitory-phosphorylation and stimulates RAF1-dependent EGF-activated ERK-signaling. Protects against cell death induced by hydrogen peroxide and staurosporine. The chain is High affinity cAMP-specific and IBMX-insensitive 3',5'-cyclic phosphodiesterase 8A (PDE8A) from Homo sapiens (Human).